Consider the following 369-residue polypeptide: Tyrosine-protein phosphatase non-receptor type 5 (369 aa).

A Phosphoserine; by PKA modification is found at Ser-49. Thr-59 carries the post-translational modification Phosphothreonine; by MAPK. At Ser-72 the chain carries Phosphoserine; by MAPK. The Tyrosine-protein phosphatase domain occupies 104-359; the sequence is LQAEFFEIPM…QFVHHAMSLY (256 aa). Substrate is bound by residues Asp-265, 300–306, and Gln-344; that span reads CSAGIGR. Cys-300 acts as the Phosphocysteine intermediate in catalysis.

It belongs to the protein-tyrosine phosphatase family. Non-receptor class subfamily. Post-translationally, phosphorylation at Ser-49 by PKA deactivates PTPN5. Phosphorylation at Thr-59 and Ser-72 by MAPKs stabilizes the phosphatase, dephosphorylation of these sites results in ubiquitin-mediated degradation of the active phosphatase. As to expression, expressed in the central nervous system except in the cerebellum. Enriched within the striatum relative to other brain areas.

Its subcellular location is the cytoplasm. It catalyses the reaction O-phospho-L-tyrosyl-[protein] + H2O = L-tyrosyl-[protein] + phosphate. Functionally, may regulate the activity of several effector molecules involved in synaptic plasticity and neuronal cell survival, including MAPKs, Src family kinases and NMDA receptors. The polypeptide is Tyrosine-protein phosphatase non-receptor type 5 (Ptpn5) (Rattus norvegicus (Rat)).